Consider the following 423-residue polypeptide: UDP-N-acetylglucosamine 1-carboxyvinyltransferase 2 (423 aa).

23 to 24 (KN) contributes to the phosphoenolpyruvate binding site. Arginine 96 contributes to the UDP-N-acetyl-alpha-D-glucosamine binding site. Cysteine 120 (proton donor) is an active-site residue. 2-(S-cysteinyl)pyruvic acid O-phosphothioketal is present on cysteine 120. Residues 125 to 129 (RPIDL), aspartate 309, and valine 331 each bind UDP-N-acetyl-alpha-D-glucosamine.

The protein belongs to the EPSP synthase family. MurA subfamily.

The protein resides in the cytoplasm. It catalyses the reaction phosphoenolpyruvate + UDP-N-acetyl-alpha-D-glucosamine = UDP-N-acetyl-3-O-(1-carboxyvinyl)-alpha-D-glucosamine + phosphate. The protein operates within cell wall biogenesis; peptidoglycan biosynthesis. Functionally, cell wall formation. Adds enolpyruvyl to UDP-N-acetylglucosamine. In Streptococcus agalactiae serotype Ia (strain ATCC 27591 / A909 / CDC SS700), this protein is UDP-N-acetylglucosamine 1-carboxyvinyltransferase 2.